The following is a 559-amino-acid chain: uncharacterized protein (559 aa).

11 consecutive transmembrane segments (helical) span residues 103–123 (LAAL…NGLF), 139–159 (FGYY…LFYY), 192–212 (AGIT…SFPF), 223–243 (FFLI…IFLL), 263–283 (WSWV…TLAV), 302–322 (MLIL…SGVA), 348–368 (AAAF…NISD), 387–407 (IRRA…PWKI), 413–434 (AFLA…IFVA), 466–486 (ALIA…MSIN), and 501–521 (IGYF…NLVF).

It belongs to the purine-cytosine permease (2.A.39) family.

It is found in the golgi apparatus membrane. This is an uncharacterized protein from Schizosaccharomyces pombe (strain 972 / ATCC 24843) (Fission yeast).